The primary structure comprises 240 residues: Terpene cyclase cdmG (240 aa).

Helical transmembrane passes span 16 to 36 (YASIVDAATLVQGFLWALNYG), 48 to 68 (YGMAIFPLCCNYAWELVYTVI), 78 to 98 (IIMTTWLILNSIMMGFTIKFA), 112 to 132 (IPFIFLAGVAAFVIAQLALAA), 134 to 154 (VGPGLAMNWVAALCYLLLTIG), and 167 to 187 (GVSYTMWLSRFVGTYVGVICV). The N-linked (GlcNAc...) asparagine glycan is linked to Asn197. A helical transmembrane segment spans residues 205–225 (IMKCFSGISLAVEIVYGVTLW).

The protein belongs to the paxB family.

It localises to the membrane. It carries out the reaction verruculide C epoxide = 3-hydroxypentacecilide A. It functions in the pathway secondary metabolite biosynthesis; terpenoid biosynthesis. Its function is as follows. Terpene cyclase; part of the gene cluster that mediates the biosynthesis of chrodrimanin B, a meroterpenoid that acts as a potent blocker of insect GABA-gated chloride channels. The first step of the pathway is the biosynthesis of 6-hydroxymellein by the polyketide synthase cdmE. The prenyltransferase cdmH acts as a 6-hydroxymellein 5-farnesyltransferase and produces the hydrophobic metabolite verruculide C. The FAD-dependent monooxygenase cdmI further converts verruculide C into verruculide B. The terpene cyclase cdmG then produced the pentacyclic molecule 3-hydroxypentacecilide A, the backbone structure of chrodrimanin B, via folding the farnesyl moiety of the substrate into the chair-boat conformation. The short-chain dehydrogenase/reductase cdmF functions as the 3-OH dehydrogenase that oxidizes the C-3 hydroxyl group of 3-hydroxypentacecilide A and produces chrodrimanin C, the dehydrogenated product of 3-hydroxypentacecilide A. The cytochrome P450 monooxygenase cdmJ then accepts both 3-hydroxypentacecilide A and chrodrimanin C and functions as a C-7-beta-hydroxylase to produce respectively chrodrimanin H and chrodrimanin F. The dioxygenase cdmA accepts chrodrimanin H to afford chrodrimanin E, which is further transformed to chrodrimanin A by the dioxygenase cdmD. CdmA can also accept chrodrimanin C as substrate to convert it into verruculide A, which is further converted into chrodrimanin T by cdmD. The last step of the biosynthesis is proposed to be performed by the acetyltransferase cdmC which acetylates chrodrimanin A to yield chrodrimanin B. The pathway may also lead to the production of additional shunt products, including chrodrimanins T and U. The polypeptide is Terpene cyclase cdmG (Talaromyces verruculosus (Penicillium verruculosum)).